A 542-amino-acid polypeptide reads, in one-letter code: Chaperonin GroEL (542 aa).

ATP contacts are provided by residues 29 to 32 (TLGP), 86 to 90 (DGTTT), Gly413, 476 to 478 (NAA), and Asp492.

It belongs to the chaperonin (HSP60) family. In terms of assembly, forms a cylinder of 14 subunits composed of two heptameric rings stacked back-to-back. Interacts with the co-chaperonin GroES.

The protein localises to the cytoplasm. The catalysed reaction is ATP + H2O + a folded polypeptide = ADP + phosphate + an unfolded polypeptide.. Its function is as follows. Together with its co-chaperonin GroES, plays an essential role in assisting protein folding. The GroEL-GroES system forms a nano-cage that allows encapsulation of the non-native substrate proteins and provides a physical environment optimized to promote and accelerate protein folding. The protein is Chaperonin GroEL of Bacillus cytotoxicus (strain DSM 22905 / CIP 110041 / 391-98 / NVH 391-98).